A 382-amino-acid chain; its full sequence is Type 2 DNA topoisomerase 6 subunit A (382 aa).

The 142-residue stretch at 14-155 (YDPQKVLKKL…MHITADRRGY (142 aa)) folds into the Topo IIA-type catalytic domain. Catalysis depends on Tyr-108, which acts as the O-(5'-phospho-DNA)-tyrosine intermediate. Mg(2+)-binding residues include Glu-202 and Asp-254.

Belongs to the TOP6A family. Homodimer. Heterotetramer of two Top6A and two Top6B chains. Mg(2+) is required as a cofactor.

The enzyme catalyses ATP-dependent breakage, passage and rejoining of double-stranded DNA.. Its function is as follows. Relaxes both positive and negative superturns and exhibits a strong decatenase activity. The sequence is that of Type 2 DNA topoisomerase 6 subunit A from Pyrococcus horikoshii (strain ATCC 700860 / DSM 12428 / JCM 9974 / NBRC 100139 / OT-3).